An 88-amino-acid polypeptide reads, in one-letter code: Large ribosomal subunit protein bL27 (88 aa).

The segment at 1-21 (MAHKKGASSSRNGRDSAAHRL) is disordered.

Belongs to the bacterial ribosomal protein bL27 family.

This is Large ribosomal subunit protein bL27 from Mycobacterium ulcerans (strain Agy99).